A 273-amino-acid polypeptide reads, in one-letter code: Formamidopyrimidine-DNA glycosylase (273 aa).

Catalysis depends on Pro2, which acts as the Schiff-base intermediate with DNA. Glu3 serves as the catalytic Proton donor. Catalysis depends on Lys58, which acts as the Proton donor; for beta-elimination activity. His92, Arg111, and Lys153 together coordinate DNA. The segment at 238 to 272 (KVYGREGQSCLSCSSTIIKIKHSGRSTFYCKTCQY) adopts an FPG-type zinc-finger fold. Catalysis depends on Arg262, which acts as the Proton donor; for delta-elimination activity.

The protein belongs to the FPG family. In terms of assembly, monomer. It depends on Zn(2+) as a cofactor.

It carries out the reaction Hydrolysis of DNA containing ring-opened 7-methylguanine residues, releasing 2,6-diamino-4-hydroxy-5-(N-methyl)formamidopyrimidine.. The catalysed reaction is 2'-deoxyribonucleotide-(2'-deoxyribose 5'-phosphate)-2'-deoxyribonucleotide-DNA = a 3'-end 2'-deoxyribonucleotide-(2,3-dehydro-2,3-deoxyribose 5'-phosphate)-DNA + a 5'-end 5'-phospho-2'-deoxyribonucleoside-DNA + H(+). Functionally, involved in base excision repair of DNA damaged by oxidation or by mutagenic agents. Acts as a DNA glycosylase that recognizes and removes damaged bases. Has a preference for oxidized purines, such as 7,8-dihydro-8-oxoguanine (8-oxoG). Has AP (apurinic/apyrimidinic) lyase activity and introduces nicks in the DNA strand. Cleaves the DNA backbone by beta-delta elimination to generate a single-strand break at the site of the removed base with both 3'- and 5'-phosphates. In Rickettsia conorii (strain ATCC VR-613 / Malish 7), this protein is Formamidopyrimidine-DNA glycosylase.